We begin with the raw amino-acid sequence, 194 residues long: ATP synthase subunit b 1 (194 aa).

A helical transmembrane segment spans residues 1–21 (MLLGTVVTVLSTLPAIAYAMD).

This sequence belongs to the ATPase B chain family. In terms of assembly, F-type ATPases have 2 components, F(1) - the catalytic core - and F(0) - the membrane proton channel. F(1) has five subunits: alpha(3), beta(3), gamma(1), delta(1), epsilon(1). F(0) has three main subunits: a(1), b(2) and c(10-14). The alpha and beta chains form an alternating ring which encloses part of the gamma chain. F(1) is attached to F(0) by a central stalk formed by the gamma and epsilon chains, while a peripheral stalk is formed by the delta and b chains.

The protein localises to the cell inner membrane. In terms of biological role, f(1)F(0) ATP synthase produces ATP from ADP in the presence of a proton or sodium gradient. F-type ATPases consist of two structural domains, F(1) containing the extramembraneous catalytic core and F(0) containing the membrane proton channel, linked together by a central stalk and a peripheral stalk. During catalysis, ATP synthesis in the catalytic domain of F(1) is coupled via a rotary mechanism of the central stalk subunits to proton translocation. Functionally, component of the F(0) channel, it forms part of the peripheral stalk, linking F(1) to F(0). This is ATP synthase subunit b 1 from Granulibacter bethesdensis (strain ATCC BAA-1260 / CGDNIH1).